A 276-amino-acid chain; its full sequence is Large ribosomal subunit protein uL2 (276 aa).

Disordered stretches follow at residues 30-57 (EKSLTEKLSKKGGRNNQGRLTVRHQGGG) and 219-276 (TVRG…RSKK).

It belongs to the universal ribosomal protein uL2 family. As to quaternary structure, part of the 50S ribosomal subunit. Forms a bridge to the 30S subunit in the 70S ribosome.

Functionally, one of the primary rRNA binding proteins. Required for association of the 30S and 50S subunits to form the 70S ribosome, for tRNA binding and peptide bond formation. It has been suggested to have peptidyltransferase activity; this is somewhat controversial. Makes several contacts with the 16S rRNA in the 70S ribosome. The chain is Large ribosomal subunit protein uL2 from Exiguobacterium sibiricum (strain DSM 17290 / CCUG 55495 / CIP 109462 / JCM 13490 / 255-15).